Here is a 131-residue protein sequence, read N- to C-terminus: Profilin-3 (131 aa).

Cysteine 13 and cysteine 115 are joined by a disulfide. The Involved in PIP2 interaction signature appears at 81 to 97 (AVIRGKKGAGGITIKKT). Threonine 111 is modified (phosphothreonine).

It belongs to the profilin family. As to quaternary structure, occurs in many kinds of cells as a complex with monomeric actin in a 1:1 ratio. Post-translationally, phosphorylated by MAP kinases.

The protein localises to the cytoplasm. It is found in the cytoskeleton. Binds to actin and affects the structure of the cytoskeleton. At high concentrations, profilin prevents the polymerization of actin, whereas it enhances it at low concentrations. The chain is Profilin-3 from Olea europaea (Common olive).